Reading from the N-terminus, the 118-residue chain is T cell receptor gamma variable 5 (118 aa).

Residues 1–17 form the signal peptide; the sequence is MRWALLVLLAFLSPASQ. Positions 18-118 constitute an Ig-like domain; that stretch reads KSSNLEGGTK…GVYYCATWDR (101 aa). An intrachain disulfide couples C41 to C113. A glycan (N-linked (GlcNAc...) asparagine) is linked at N106.

As to quaternary structure, gamma-delta TR is a heterodimer composed of a gamma and delta chain; disulfide-linked. The gamma-delta TR is associated with the transmembrane signaling CD3 coreceptor proteins following the stoichiometry: a single gamma-delta TR heterodimer associates with one CD3D-CD3E heterodimer, one CD3G-CD3E heterodimer and one CD247 homodimer forming a stable octameric structure. Upon activation, gamma-delta TR complex associates with FCER1G to initiate intracellular signaling.

The protein localises to the cell membrane. Functionally, v region of the variable domain of T cell receptor (TR) gamma chain that participates in the antigen recognition. Gamma-delta TRs recognize a variety of self and foreign non-peptide antigens frequently expressed at the epithelial boundaries between the host and external environment, including endogenous lipids presented by MH-like protein CD1D and phosphoantigens presented by butyrophilin-like molecule BTN3A1. Upon antigen recognition induces rapid, innate-like immune responses involved in pathogen clearance and tissue repair. Binding of gamma-delta TR complex to antigen triggers phosphorylation of immunoreceptor tyrosine-based activation motifs (ITAMs) in the CD3 chains by the LCK and FYN kinases, allowing the recruitment, phosphorylation, and activation of ZAP70 that facilitates phosphorylation of the scaffolding proteins LCP2 and LAT. This lead to the formation of a supramolecular signalosome that recruits the phospholipase PLCG1, resulting in calcium mobilization and ERK activation, ultimately leading to T cell expansion and differentiation into effector cells. Gamma-delta TRs are produced through somatic rearrangement of a limited repertoire of variable (V), diversity (D), and joining (J) genes. The potential diversity of gamma-delta TRs is conferred by the unique ability to rearrange (D) genes in tandem and to utilize all three reading frames. The combinatorial diversity is considerably increased by the sequence exonuclease trimming and random nucleotide (N) region additions which occur during the V-(D)-J rearrangements. This is T cell receptor gamma variable 5 from Homo sapiens (Human).